Here is a 411-residue protein sequence, read N- to C-terminus: Arginine deiminase (411 aa).

Cys-401 (amidino-cysteine intermediate) is an active-site residue.

Belongs to the arginine deiminase family.

It is found in the cytoplasm. It catalyses the reaction L-arginine + H2O = L-citrulline + NH4(+). Its pathway is amino-acid degradation; L-arginine degradation via ADI pathway; carbamoyl phosphate from L-arginine: step 1/2. In Streptococcus pyogenes serotype M49 (strain NZ131), this protein is Arginine deiminase.